Here is a 453-residue protein sequence, read N- to C-terminus: Ribulose bisphosphate carboxylase large chain (453 aa).

Positions 1 to 2 (MS) are excised as a propeptide. Position 3 is an N-acetylproline (Pro3). At Lys14 the chain carries N6,N6,N6-trimethyllysine. The substrate site is built by Asn123 and Thr173. Lys175 serves as the catalytic Proton acceptor. Lys177 serves as a coordination point for substrate. Mg(2+) contacts are provided by Lys201, Asp203, and Glu204. Lys201 is modified (N6-carboxylysine). The active-site Proton acceptor is His294. Substrate is bound by residues Arg295, His327, and Ser379.

Belongs to the RuBisCO large chain family. Type I subfamily. In terms of assembly, heterohexadecamer of 8 large chains and 8 small chains; disulfide-linked. The disulfide link is formed within the large subunit homodimers. Mg(2+) is required as a cofactor. In terms of processing, the disulfide bond which can form in the large chain dimeric partners within the hexadecamer appears to be associated with oxidative stress and protein turnover.

It localises to the plastid. Its subcellular location is the chloroplast. It carries out the reaction 2 (2R)-3-phosphoglycerate + 2 H(+) = D-ribulose 1,5-bisphosphate + CO2 + H2O. The enzyme catalyses D-ribulose 1,5-bisphosphate + O2 = 2-phosphoglycolate + (2R)-3-phosphoglycerate + 2 H(+). Functionally, ruBisCO catalyzes two reactions: the carboxylation of D-ribulose 1,5-bisphosphate, the primary event in carbon dioxide fixation, as well as the oxidative fragmentation of the pentose substrate in the photorespiration process. Both reactions occur simultaneously and in competition at the same active site. This chain is Ribulose bisphosphate carboxylase large chain, found in Galium album (White bedstraw).